A 502-amino-acid chain; its full sequence is MSIRAEEISALIKQQIENYESQIQVSDVGTVIQIGDGIARVHGLDNVMSGELVEFANGVMGMALNLEENNVGIVILGPYTGIKEGDEVRRTGRIMEVPVGEALIGRVVNPLGQPVDGLGPVETTETRPIESPAPGVMDRKSVHEPLQTGIKAIDALVPIGRGQRELIIGDRQTGKTAVAIDTILNQKGQDMICIYVAIGQKESTVRTVVETLRKHGALDYTIVVTASASQPAPLLFLAPYAGVSMGEYFMYKGKHVLVVYDDLSKQAAAYRELSLLLRRPPGREAYPGDVFYLHSRLLERAAKLSDAKGAGSLTALPFVETQAGDISAYIPTNVISITDGQIFLQSDLFFSGVRPAINAGLSVSRVGGAAQIKAMKKVSGTLRLDLAAYRELEAFAQFGSDLDKATQAKLARGARTVEVLKQDLHQPIPVEKQVAIIYALTRGFLDDIPVEDVRRFEKEFFLWLDQNGQHLLEHIRTTKDLPNEEDFNKAIEAFKKTFVVSQ.

The segment at 115–139 (VDGLGPVETTETRPIESPAPGVMDR) is disordered. 169–176 (GDRQTGKT) contributes to the ATP binding site.

Belongs to the ATPase alpha/beta chains family. F-type ATPases have 2 components, CF(1) - the catalytic core - and CF(0) - the membrane proton channel. CF(1) has five subunits: alpha(3), beta(3), gamma(1), delta(1), epsilon(1). CF(0) has three main subunits: a(1), b(2) and c(9-12). The alpha and beta chains form an alternating ring which encloses part of the gamma chain. CF(1) is attached to CF(0) by a central stalk formed by the gamma and epsilon chains, while a peripheral stalk is formed by the delta and b chains.

Its subcellular location is the cell membrane. It catalyses the reaction ATP + H2O + 4 H(+)(in) = ADP + phosphate + 5 H(+)(out). Its function is as follows. Produces ATP from ADP in the presence of a proton gradient across the membrane. The alpha chain is a regulatory subunit. The chain is ATP synthase subunit alpha from Geobacillus thermodenitrificans (strain NG80-2).